Consider the following 366-residue polypeptide: tRNA N6-adenosine threonylcarbamoyltransferase (366 aa).

The a divalent metal cation site is built by histidine 130, histidine 134, and tyrosine 151. Substrate contacts are provided by residues 151-155, aspartate 183, glycine 198, glutamate 202, and asparagine 297; that span reads YVSGG. Aspartate 325 lines the a divalent metal cation pocket.

This sequence belongs to the KAE1 / TsaD family. In terms of assembly, component of the EKC/KEOPS complex composed of at least BUD32, CGI121, GON7, KAE1 and PCC1; the whole complex dimerizes. Requires a divalent metal cation as cofactor.

Its subcellular location is the cytoplasm. The protein localises to the nucleus. It catalyses the reaction L-threonylcarbamoyladenylate + adenosine(37) in tRNA = N(6)-L-threonylcarbamoyladenosine(37) in tRNA + AMP + H(+). In terms of biological role, component of the EKC/KEOPS complex that is required for the formation of a threonylcarbamoyl group on adenosine at position 37 (t(6)A37) in tRNAs that read codons beginning with adenine. The complex is probably involved in the transfer of the threonylcarbamoyl moiety of threonylcarbamoyl-AMP (TC-AMP) to the N6 group of A37. KAE1 likely plays a direct catalytic role in this reaction, but requires other protein(s) of the complex to fulfill this activity. The EKC/KEOPS complex also promotes both telomere uncapping and telomere elongation. The complex is required for efficient recruitment of transcriptional coactivators. This chain is tRNA N6-adenosine threonylcarbamoyltransferase, found in Cryptococcus neoformans var. neoformans serotype D (strain JEC21 / ATCC MYA-565) (Filobasidiella neoformans).